The sequence spans 732 residues: S-adenosyl-L-methionine-dependent tRNA 4-demethylwyosine synthase TYW1 (732 aa).

In terms of domain architecture, Flavodoxin-like spans 79–237; sequence VKIFYGSQTG…DFRAWKTKFI (159 aa). FMN-binding positions include 85 to 89 and 176 to 208; these read SQTGT and VFGL…HRVM. Positions 248 to 314 are disordered; it reads RKKSCGGHCK…HQSLNSIVDV (67 aa). A compositionally biased stretch (basic and acidic residues) spans 259–286; the sequence is GKCESHQHGSEEREEGSHEQDELHHRDT. Residues 287 to 301 are compositionally biased toward acidic residues; that stretch reads EEEEPFESSSEEEFG. Residues 400–644 form the Radical SAM core domain; it reads YGIESHRCME…VDLIPEYEIA (245 aa). [4Fe-4S] cluster is bound by residues cysteine 416, cysteine 420, and cysteine 423.

This sequence belongs to the TYW1 family. It depends on [4Fe-4S] cluster as a cofactor.

It catalyses the reaction N(1)-methylguanosine(37) in tRNA(Phe) + pyruvate + S-adenosyl-L-methionine = 4-demethylwyosine(37) in tRNA(Phe) + 5'-deoxyadenosine + L-methionine + CO2 + H2O. The protein operates within tRNA modification; wybutosine-tRNA(Phe) biosynthesis. Its function is as follows. Probable component of the wybutosine biosynthesis pathway. Wybutosine is a hyper modified guanosine with a tricyclic base found at the 3'-position adjacent to the anticodon of eukaryotic phenylalanine tRNA. Catalyzes the condensation of N-methylguanine with 2 carbon atoms from pyruvate to form the tricyclic 4-demethylwyosine, an intermediate in wybutosine biosynthesis. The chain is S-adenosyl-L-methionine-dependent tRNA 4-demethylwyosine synthase TYW1 (TYW1) from Homo sapiens (Human).